The chain runs to 346 residues: D-alanine--D-alanine ligase (346 aa).

Residues 125-325 enclose the ATP-grasp domain; it reads KRIWRSEGLP…YPALCLEVLR (201 aa). Residue 151-206 participates in ATP binding; sequence FAALGSPMIVKPDREGSTIGLTKVTQIEQCGAAYALAARHDAMVLCEQFVKGDEVT. The Mg(2+) site is built by Asp278, Glu292, and Asn294.

Belongs to the D-alanine--D-alanine ligase family. Requires Mg(2+) as cofactor. Mn(2+) is required as a cofactor.

The protein resides in the cytoplasm. The enzyme catalyses 2 D-alanine + ATP = D-alanyl-D-alanine + ADP + phosphate + H(+). Its pathway is cell wall biogenesis; peptidoglycan biosynthesis. Functionally, cell wall formation. This chain is D-alanine--D-alanine ligase, found in Albidiferax ferrireducens (strain ATCC BAA-621 / DSM 15236 / T118) (Rhodoferax ferrireducens).